We begin with the raw amino-acid sequence, 117 residues long: Envelope glycoprotein J (117 aa).

The N-terminal stretch at 1-26 (MRSLLFVVGAWVAAAVTHLTPNAALA) is a signal peptide. Residues 26–64 (ATGTTPTVGANSTADPGTGANGTTVPAAGTPANSTTAAE) are disordered. Positions 27–40 (TGTTPTVGANSTAD) are enriched in polar residues. The Extracellular portion of the chain corresponds to 27–73 (TGTTPTVGANSTADPGTGANGTTVPAAGTPANSTTAAETPAPFPPVD). Residues asparagine 36, asparagine 46, and asparagine 58 are each glycosylated (N-linked (GlcNAc...) asparagine; by host). A helical membrane pass occupies residues 74-94 (FALPVVIGGLCALTLAAMGAG). Over 95-117 (ALLHRCCRRAAARRRQRAAYVYA) the chain is Cytoplasmic.

Belongs to the alphaherpesvirinae glycoprotein J family.

It is found in the host Golgi apparatus membrane. The protein localises to the host endoplasmic reticulum membrane. The protein resides in the host endosome membrane. Functionally, inhibits host cell apoptosis. Induces an increase in reactive oxygen species (ROS) in the host cell. The sequence is that of Envelope glycoprotein J (gJ) from Homo sapiens (Human).